The sequence spans 323 residues: Phosphoribosylaminoimidazole-succinocarboxamide synthase (323 aa).

The protein belongs to the SAICAR synthetase family.

It carries out the reaction 5-amino-1-(5-phospho-D-ribosyl)imidazole-4-carboxylate + L-aspartate + ATP = (2S)-2-[5-amino-1-(5-phospho-beta-D-ribosyl)imidazole-4-carboxamido]succinate + ADP + phosphate + 2 H(+). It participates in purine metabolism; IMP biosynthesis via de novo pathway; 5-amino-1-(5-phospho-D-ribosyl)imidazole-4-carboxamide from 5-amino-1-(5-phospho-D-ribosyl)imidazole-4-carboxylate: step 1/2. In Azobacteroides pseudotrichonymphae genomovar. CFP2, this protein is Phosphoribosylaminoimidazole-succinocarboxamide synthase.